Consider the following 69-residue polypeptide: Calcium-binding protein (69 aa).

2 EF-hand domains span residues 2 to 37 (VNRT…VNCP) and 38 to 69 (FKKE…VLCS). 10 residues coordinate Ca(2+): Asp15, Asp17, Ser19, Lys21, Glu26, Asp51, Asp53, Asp55, Gln57, and Glu62.

The sequence is that of Calcium-binding protein from Schistosoma mansoni (Blood fluke).